Reading from the N-terminus, the 647-residue chain is 1-deoxy-D-xylulose-5-phosphate synthase (647 aa).

Thiamine diphosphate-binding positions include H74 and 115–117; that span reads GHS. D146 contacts Mg(2+). Thiamine diphosphate-binding positions include 147–148, N175, Y286, and E367; that span reads GA. A Mg(2+)-binding site is contributed by N175.

It belongs to the transketolase family. DXPS subfamily. As to quaternary structure, homodimer. The cofactor is Mg(2+). Requires thiamine diphosphate as cofactor.

The enzyme catalyses D-glyceraldehyde 3-phosphate + pyruvate + H(+) = 1-deoxy-D-xylulose 5-phosphate + CO2. It functions in the pathway metabolic intermediate biosynthesis; 1-deoxy-D-xylulose 5-phosphate biosynthesis; 1-deoxy-D-xylulose 5-phosphate from D-glyceraldehyde 3-phosphate and pyruvate: step 1/1. Functionally, catalyzes the acyloin condensation reaction between C atoms 2 and 3 of pyruvate and glyceraldehyde 3-phosphate to yield 1-deoxy-D-xylulose-5-phosphate (DXP). The polypeptide is 1-deoxy-D-xylulose-5-phosphate synthase (Heliobacterium modesticaldum (strain ATCC 51547 / Ice1)).